We begin with the raw amino-acid sequence, 152 residues long: Isoquinoline 1-oxidoreductase subunit alpha (152 aa).

The 2Fe-2S ferredoxin-type domain maps to 1 to 77; sequence MIEFILNGQP…RQSVTTIEGL (77 aa). 3 residues coordinate [2Fe-2S] cluster: cysteine 39, cysteine 44, and cysteine 47.

In terms of assembly, heterodimer of an alpha chain and a beta chain.

The enzyme catalyses isoquinoline + A + H2O = isoquinolin-1(2H)-one + AH2. Functionally, specific towards N-containing N-heterocyclic substrates, including isoquinoline, isoquinolin-5-ol, phthalazine and quinazoline. The chain is Isoquinoline 1-oxidoreductase subunit alpha (iorA) from Brevundimonas diminuta (Pseudomonas diminuta).